The primary structure comprises 177 residues: Sec-independent protein translocase protein TatB (177 aa).

The helical transmembrane segment at 1–21 threads the bilayer; the sequence is MFDFAWSEIAVIGVVALVVIG. Residues 136–146 are compositionally biased toward basic and acidic residues; the sequence is REKTVSSETAR. The segment at 136–177 is disordered; sequence REKTVSSETARRAATAPAFIPPGEAFRSARRAPAFIPPADQG.

It belongs to the TatB family. As to quaternary structure, the Tat system comprises two distinct complexes: a TatABC complex, containing multiple copies of TatA, TatB and TatC subunits, and a separate TatA complex, containing only TatA subunits. Substrates initially bind to the TatABC complex, which probably triggers association of the separate TatA complex to form the active translocon.

Its subcellular location is the cell inner membrane. Part of the twin-arginine translocation (Tat) system that transports large folded proteins containing a characteristic twin-arginine motif in their signal peptide across membranes. Together with TatC, TatB is part of a receptor directly interacting with Tat signal peptides. TatB may form an oligomeric binding site that transiently accommodates folded Tat precursor proteins before their translocation. In Granulibacter bethesdensis (strain ATCC BAA-1260 / CGDNIH1), this protein is Sec-independent protein translocase protein TatB.